The chain runs to 308 residues: 2-methylisocitrate lyase (308 aa).

A substrate-binding site is contributed by 51–53 (SGA). Mg(2+)-binding residues include aspartate 90 and aspartate 92. Substrate-binding positions include 127–128 (CG), arginine 160, glutamate 190, 212–214 (NMT), arginine 243, and arginine 272.

This sequence belongs to the isocitrate lyase/PEP mutase superfamily. Methylisocitrate lyase family. In terms of assembly, homotetramer; dimer of dimers. The cofactor is Mg(2+).

It carries out the reaction (2S,3R)-3-hydroxybutane-1,2,3-tricarboxylate = pyruvate + succinate. The protein operates within organic acid metabolism; propanoate degradation. Involved in the catabolism of short chain fatty acids (SCFA) via the 2-methylcitrate cycle I (propionate degradation route). Catalyzes the thermodynamically favored C-C bond cleavage of (2R,3S)-2-methylisocitrate to yield pyruvate and succinate via an alpha-carboxy-carbanion intermediate. The chain is 2-methylisocitrate lyase from Aeropyrum pernix (strain ATCC 700893 / DSM 11879 / JCM 9820 / NBRC 100138 / K1).